A 223-amino-acid chain; its full sequence is Sigma non-opioid intracellular receptor 1 (223 aa).

The Lumenal segment spans residues 1 to 9 (MQWALGRRW). The segment at 2-8 (QWALGRR) is targeting to endoplasmic reticulum-associated lipid droplets. Residues 10–30 (VWAALLLAAAAVLTQVVWLWL) traverse the membrane as a helical segment. Residues 31–223 (GTQSFVFQHE…FTTYLFGQDS (193 aa)) are Cytoplasmic-facing. Residues 99-106 (SLSEYVLL) form an important for ligand-binding region. Residues 177–223 (VIPSTLAFALADTIFSTQDFLTLFYTLRAYARGLRLEFTTYLFGQDS) form a C-terminal hydrophobic region region.

It belongs to the ERG2 family. In terms of assembly, homotrimer. Forms a ternary complex with ANK2 and ITPR3. The complex is disrupted by agonists. Interacts with KCNA4. Interacts with KCNA2; cocaine consumption leads to increased interaction. Interacts with RNF112 in an oxidative stress-regulated manner.

Its subcellular location is the nucleus inner membrane. It is found in the nucleus outer membrane. The protein resides in the nucleus envelope. The protein localises to the cytoplasmic vesicle. It localises to the endoplasmic reticulum membrane. Its subcellular location is the membrane. It is found in the lipid droplet. The protein resides in the cell junction. The protein localises to the cell membrane. It localises to the cell projection. Its subcellular location is the growth cone. It is found in the postsynaptic density membrane. In terms of biological role, functions in lipid transport from the endoplasmic reticulum and is involved in a wide array of cellular functions probably through regulation of the biogenesis of lipid microdomains at the plasma membrane. Involved in the regulation of different receptors it plays a role in BDNF signaling and EGF signaling. Also regulates ion channels like the potassium channel and could modulate neurotransmitter release. Plays a role in calcium signaling through modulation together with ANK2 of the ITP3R-dependent calcium efflux at the endoplasmic reticulum. Plays a role in several other cell functions including proliferation, survival and death. Originally identified for its ability to bind various psychoactive drugs it is involved in learning processes, memory and mood alteration. Necessary for proper mitochondrial axonal transport in motor neurons, in particular the retrograde movement of mitochondria. Plays a role in protecting cells against oxidative stress-induced cell death via its interaction with RNF112. The polypeptide is Sigma non-opioid intracellular receptor 1 (SIGMAR1) (Mustela erminea (Ermine)).